A 160-amino-acid chain; its full sequence is Na(+)/H(+) antiporter subunit E1 (160 aa).

Transmembrane regions (helical) follow at residues 1–21, 27–47, 49–69, and 101–121; these read MAIQ…VTGS, FILG…VLPG, FYLI…IELI, and WQIV…VLGI.

Belongs to the CPA3 antiporters (TC 2.A.63) subunit E family. As to quaternary structure, may form a heterooligomeric complex that consists of seven subunits: mnhA1, mnhB1, mnhC1, mnhD1, mnhE1, mnhF1 and mnhG1.

Its subcellular location is the cell membrane. In terms of biological role, mnh complex is a Na(+)/H(+) antiporter involved in Na(+) excretion. The sequence is that of Na(+)/H(+) antiporter subunit E1 (mnhE1) from Staphylococcus saprophyticus subsp. saprophyticus (strain ATCC 15305 / DSM 20229 / NCIMB 8711 / NCTC 7292 / S-41).